The chain runs to 186 residues: Large ribosomal subunit protein uL22 (186 aa).

Residues 159 to 186 (KATDEEPTKKKLSKKKLQRQKEKMMRSE) are disordered. A compositionally biased stretch (basic and acidic residues) spans 177-186 (RQKEKMMRSE).

The protein belongs to the universal ribosomal protein uL22 family.

The polypeptide is Large ribosomal subunit protein uL22 (RpL17) (Phlebotomus papatasi (Sandfly)).